Reading from the N-terminus, the 280-residue chain is Acetylglutamate kinase (280 aa).

Substrate contacts are provided by residues 64 to 65, arginine 86, and asparagine 179; that span reads GG.

This sequence belongs to the acetylglutamate kinase family. ArgB subfamily.

Its subcellular location is the cytoplasm. The enzyme catalyses N-acetyl-L-glutamate + ATP = N-acetyl-L-glutamyl 5-phosphate + ADP. The protein operates within amino-acid biosynthesis; L-arginine biosynthesis; N(2)-acetyl-L-ornithine from L-glutamate: step 2/4. Catalyzes the ATP-dependent phosphorylation of N-acetyl-L-glutamate. This is Acetylglutamate kinase from Campylobacter fetus subsp. fetus (strain 82-40).